Consider the following 325-residue polypeptide: tRNA(Ile)-lysidine synthase (325 aa).

ATP is bound at residue 34–39 (SGGQDS).

It belongs to the tRNA(Ile)-lysidine synthase family.

Its subcellular location is the cytoplasm. It carries out the reaction cytidine(34) in tRNA(Ile2) + L-lysine + ATP = lysidine(34) in tRNA(Ile2) + AMP + diphosphate + H(+). In terms of biological role, ligates lysine onto the cytidine present at position 34 of the AUA codon-specific tRNA(Ile) that contains the anticodon CAU, in an ATP-dependent manner. Cytidine is converted to lysidine, thus changing the amino acid specificity of the tRNA from methionine to isoleucine. In Synechococcus sp. (strain ATCC 27144 / PCC 6301 / SAUG 1402/1) (Anacystis nidulans), this protein is tRNA(Ile)-lysidine synthase.